Here is a 3080-residue protein sequence, read N- to C-terminus: Adhesion G-protein coupled receptor G4 (3080 aa).

An N-terminal signal peptide occupies residues 1-27 (MKEHIIYQKLYGLILMSSFIFLSDTLS). Over 28–2740 (LKGKKLDFFG…SRSTVDSVNE (2713 aa)) the chain is Extracellular. Positions 29-228 (KGKKLDFFGR…IPTVDRTLRC (200 aa)) constitute a Pentraxin (PTX) domain. 2 disulfide bridges follow: C58-C123 and C200-C228. Residue D202 coordinates Mg(2+). 4 N-linked (GlcNAc...) asparagine glycosylation sites follow: N233, N487, N836, and N899. Residues 946–959 (SEGISAGSPTSGST) show a composition bias toward polar residues. The disordered stretch occupies residues 946–965 (SEGISAGSPTSGSTHIFGEP). N-linked (GlcNAc...) asparagine glycosylation is present at N1020. The segment at 1274–1348 (VTEMSPSKNS…ITPTLTSSNT (75 aa)) is disordered. Polar residues-rich tracts occupy residues 1277–1296 (MSPSKNSFISYSRGTPSLEM), 1305–1315 (TKISSHQTHSP), and 1324–1348 (SDGNLASSPTSGSTQITPTLTSSNT). Residue N1519 is glycosylated (N-linked (GlcNAc...) asparagine). Residues 2109–2139 (SRTTITANPRTVSHPSSFSRKTMSPSTTDHT) are compositionally biased toward polar residues. The tract at residues 2109 to 2141 (SRTTITANPRTVSHPSSFSRKTMSPSTTDHTLS) is disordered. N-linked (GlcNAc...) asparagine glycosylation is found at N2361 and N2640. The region spanning 2578–2734 (MAFSIHSYEE…GVLMDLSRST (157 aa)) is the GAIN-B domain. Disulfide bonds link C2685-C2716 and C2704-C2718. Residues 2685–2734 (CAFWDFENNNGLGGWNSSGCKVKETNVNYTICQCDHLTHFGVLMDLSRST) are GPS. The tract at residues 2723 to 2734 (HFGVLMDLSRST) is stachel. The chain crosses the membrane as a helical span at residues 2741–2766 (QILALITYTGCGISSIFLGVAVVTYI). Topologically, residues 2767–2777 (AFHKLRKDYPA) are cytoplasmic. The chain crosses the membrane as a helical span at residues 2778–2800 (KILINLCTALLMLNLVFLINSWL). At 2801–2806 (SSFQKV) the chain is on the extracellular side. Residues 2807 to 2835 (GVCITAAVALHYFLLVSFTWMGLEAVHMY) form a helical membrane-spanning segment. C2809 and C2886 are disulfide-bonded. The Cytoplasmic segment spans residues 2836 to 2849 (LALVKVFNIYIPNY). Residues 2850–2870 (ILKFCLVGWGIPAIMVAITVS) form a helical membrane-spanning segment. Residues 2871–2892 (VKKDLYGTLSPTTPFCWIKDDS) are Extracellular-facing. The chain crosses the membrane as a helical span at residues 2893 to 2918 (IFYISVVAYFCLIFLMNLSMFCTVLV). The Cytoplasmic segment spans residues 2919–2937 (QLNSVKSQIQKTRRKMILH). The chain crosses the membrane as a helical span at residues 2938–2961 (DLKGTMSLTFLLGLTWGFAFFAWG). At 2962-2965 (PMRN) the chain is on the extracellular side. The helical transmembrane segment at 2966-2989 (FFLYLFAIFNTLQGFFIFVFHCVM) threads the bilayer. At 2990–3080 (KESVREQWQI…FDKDPYCSSP (91 aa)) the chain is on the cytoplasmic side. Positions 3051–3065 (FKSLGSAQGTPSEIS) are enriched in polar residues. A disordered region spans residues 3051-3080 (FKSLGSAQGTPSEISFPNDDFDKDPYCSSP).

This sequence belongs to the G-protein coupled receptor 2 family. Adhesion G-protein coupled receptor (ADGR) subfamily. Homodimer; homodimerizes via its Pentraxin domain in a calcium-independent manner. Heterodimer of 2 chains generated by proteolytic processing; the large extracellular N-terminal fragment and the membrane-bound C-terminal fragment predominantly remain associated and non-covalently linked. In terms of processing, autoproteolytically processed at the GPS region of the GAIN-B domain; this cleavage modulates receptor activity. N-glycosylated. As to expression, detected in fetal retina. Highly expressed in normal enterochromaffin cells and in neuroendocrine carcinoma. Detected in normal liver; highly expressed in primary liver carcinoma.

It localises to the membrane. With respect to regulation, forms a heterodimer of 2 chains generated by proteolytic processing that remain associated through non-covalent interactions mediated by the GAIN-B domain. In the inactivated receptor, the Stachel sequence (also named stalk) is embedded in the GAIN-B domain, where it adopts a beta-strand conformation. On activation, the Stachel moves into the 7 transmembrane region and adopts a twisted hook-shaped configuration that forms contacts within the receptor, leading to coupling of a G-alpha protein, which activates signaling. The cleaved GAIN-B and N-terminal domains can then dissociate from the rest of the receptor. Its function is as follows. Orphan adhesion G-protein coupled receptor (aGPCR). Ligand binding causes a conformation change that triggers signaling via guanine nucleotide-binding proteins (G proteins) and modulates the activity of downstream effectors, such as adenylate cyclase. ADGRG4 is coupled to G(s) G proteins and mediates activation of adenylate cyclase activity. May be act as sensor of mechanical forces. The protein is Adhesion G-protein coupled receptor G4 of Homo sapiens (Human).